The chain runs to 406 residues: Formate-dependent phosphoribosylglycinamide formyltransferase (406 aa).

N(1)-(5-phospho-beta-D-ribosyl)glycinamide is bound by residues 27–28 (EL) and Glu-87. Residues Arg-120, Lys-162, 167 to 172 (SSGKGQ), 202 to 205 (EGFI), and Glu-210 contribute to the ATP site. One can recognise an ATP-grasp domain in the interval 125-320 (RLAAETLGLP…EFELHARALL (196 aa)). Positions 279 and 291 each coordinate Mg(2+). N(1)-(5-phospho-beta-D-ribosyl)glycinamide-binding positions include Asp-298, Lys-367, and 374 to 375 (RR).

Belongs to the PurK/PurT family. As to quaternary structure, homodimer.

The enzyme catalyses N(1)-(5-phospho-beta-D-ribosyl)glycinamide + formate + ATP = N(2)-formyl-N(1)-(5-phospho-beta-D-ribosyl)glycinamide + ADP + phosphate + H(+). It functions in the pathway purine metabolism; IMP biosynthesis via de novo pathway; N(2)-formyl-N(1)-(5-phospho-D-ribosyl)glycinamide from N(1)-(5-phospho-D-ribosyl)glycinamide (formate route): step 1/1. Functionally, involved in the de novo purine biosynthesis. Catalyzes the transfer of formate to 5-phospho-ribosyl-glycinamide (GAR), producing 5-phospho-ribosyl-N-formylglycinamide (FGAR). Formate is provided by PurU via hydrolysis of 10-formyl-tetrahydrofolate. This Bordetella parapertussis (strain 12822 / ATCC BAA-587 / NCTC 13253) protein is Formate-dependent phosphoribosylglycinamide formyltransferase.